A 479-amino-acid chain; its full sequence is V-type ATP synthase beta chain (479 aa).

The segment at E458–S479 is disordered.

Belongs to the ATPase alpha/beta chains family.

Functionally, produces ATP from ADP in the presence of a proton gradient across the membrane. The V-type beta chain is a regulatory subunit. The sequence is that of V-type ATP synthase beta chain from Nitrosococcus oceani (strain ATCC 19707 / BCRC 17464 / JCM 30415 / NCIMB 11848 / C-107).